Consider the following 232-residue polypeptide: Somatolactin (232 aa).

The first 16 residues, 1 to 16 (MHNWKGVWLCSLFLTF), serve as a signal peptide directing secretion. 3 disulfide bridges follow: cysteine 31/cysteine 41, cysteine 91/cysteine 206, and cysteine 223/cysteine 231. The N-linked (GlcNAc...) asparagine glycan is linked to asparagine 147.

Belongs to the somatotropin/prolactin family. Pituitary gland.

Its subcellular location is the secreted. The sequence is that of Somatolactin from Protopterus annectens (African lungfish).